The sequence spans 560 residues: uncharacterized protein (560 aa).

Residues 1 to 281 form the ABC transmembrane type-1 domain; sequence MLWNWVALVG…LGSFFHVAMN (281 aa). Helical transmembrane passes span 2 to 22, 32 to 52, 108 to 128, 138 to 160, 168 to 188, 223 to 243, and 249 to 269; these read LWNW…SYIL, LLSA…RAFA, IYFG…LTLF, TAII…NKIA, WSIY…LITL, VSLM…TALL, and QLSV…FIPL. In terms of domain architecture, ABC transporter spans 314-547; sequence VEIKDLHFSY…QGAYAEMFQQ (234 aa). 347–354 serves as a coordination point for ATP; the sequence is GKSGCGKS.

The protein belongs to the ABC transporter superfamily.

Its subcellular location is the cell inner membrane. This is an uncharacterized protein from Haemophilus influenzae (strain ATCC 51907 / DSM 11121 / KW20 / Rd).